Reading from the N-terminus, the 172-residue chain is Putative phosphoesterase BAMEG_3349 (172 aa).

Residue histidine 34 is the Proton donor of the active site. Short sequence motifs (HXTX) lie at residues 34–37 (HITL) and 115–118 (HLTI). The Proton acceptor role is filled by histidine 115.

This sequence belongs to the 2H phosphoesterase superfamily. YjcG family.

The chain is Putative phosphoesterase BAMEG_3349 from Bacillus anthracis (strain CDC 684 / NRRL 3495).